The primary structure comprises 136 residues: Small ribosomal subunit protein uS19 (136 aa).

Residues Arg114–Lys136 form a disordered region.

This sequence belongs to the universal ribosomal protein uS19 family.

Its function is as follows. Protein S19 forms a complex with S13 that binds strongly to the 16S ribosomal RNA. This Methanosarcina barkeri (strain Fusaro / DSM 804) protein is Small ribosomal subunit protein uS19.